Reading from the N-terminus, the 717-residue chain is DNA ligase (717 aa).

NAD(+) is bound by residues Asp44–Asp48, Ser93–Leu94, and Glu127. Residue Lys129 is the N6-AMP-lysine intermediate of the active site. Residues Arg150, Glu186, Lys302, and Lys326 each coordinate NAD(+). Zn(2+) contacts are provided by Cys431, Cys434, Cys455, and Cys461. Positions Thr639–Gly717 constitute a BRCT domain.

It belongs to the NAD-dependent DNA ligase family. LigA subfamily. Mg(2+) serves as cofactor. The cofactor is Mn(2+).

The catalysed reaction is NAD(+) + (deoxyribonucleotide)n-3'-hydroxyl + 5'-phospho-(deoxyribonucleotide)m = (deoxyribonucleotide)n+m + AMP + beta-nicotinamide D-nucleotide.. DNA ligase that catalyzes the formation of phosphodiester linkages between 5'-phosphoryl and 3'-hydroxyl groups in double-stranded DNA using NAD as a coenzyme and as the energy source for the reaction. It is essential for DNA replication and repair of damaged DNA. This chain is DNA ligase, found in Rhizobium rhizogenes (strain K84 / ATCC BAA-868) (Agrobacterium radiobacter).